The chain runs to 533 residues: Flavin-containing monooxygenase 5 (533 aa).

Arg5 carries the dimethylated arginine modification. FAD is bound by residues 10–14 (GGGVS), Glu33, and 41–42 (LW). Ser54 is modified (phosphoserine). Tyr56 bears the Phosphotyrosine mark. Residue Ser58 is modified to Phosphoserine. FAD is bound at residue 62–63 (NT). 196 to 199 (SGGD) lines the NADP(+) pocket. Phosphoserine is present on Ser280. The residue at position 284 (Thr284) is a Phosphothreonine. Ser401 carries the phosphoserine modification. A helical membrane pass occupies residues 510 to 530 (MVSAVTTGCFMLAVVFFAIIM).

It belongs to the FMO family. It depends on FAD as a cofactor. Expressed in liver.

The protein localises to the microsome membrane. It localises to the endoplasmic reticulum membrane. The catalysed reaction is N,N-dimethylaniline + NADPH + O2 + H(+) = N,N-dimethylaniline N-oxide + NADP(+) + H2O. It catalyses the reaction NADPH + O2 + H(+) = H2O2 + NADP(+). The enzyme catalyses heptan-2-one + NADPH + O2 + H(+) = pentyl acetate + NADP(+) + H2O. It carries out the reaction octan-3-one + NADPH + O2 + H(+) = pentyl propanoate + NADP(+) + H2O. The catalysed reaction is octan-3-one + NADPH + O2 + H(+) = ethyl hexanoate + NADP(+) + H2O. It catalyses the reaction hexan-3-one + NADPH + O2 + H(+) = ethyl butanoate + NADP(+) + H2O. The enzyme catalyses hexan-3-one + NADPH + O2 + H(+) = propyl propanoate + NADP(+) + H2O. It carries out the reaction heptan-4-one + NADPH + O2 + H(+) = propyl butanoate + NADP(+) + H2O. The catalysed reaction is (2E)-geranial + NADPH + O2 + H(+) = (1E)-2,6-dimethylhepta-1,5-dien-1-yl formate + NADP(+) + H2O. It catalyses the reaction sulcatone + NADPH + O2 + H(+) = 4-methylpent-3-en-1-yl acetate + NADP(+) + H2O. Its function is as follows. Acts as a Baeyer-Villiger monooxygenase on a broad range of substrates. Catalyzes the insertion of an oxygen atom into a carbon-carbon bond adjacent to a carbonyl, which converts ketones to esters. Active on diverse carbonyl compounds, whereas soft nucleophiles are mostly non- or poorly reactive. In contrast with other forms of FMO it is non- or poorly active on 'classical' substrates such as drugs, pesticides, and dietary components containing soft nucleophilic heteroatoms. Able to oxidize drug molecules bearing a carbonyl group on an aliphatic chain, such as nabumetone and pentoxifylline. Also, in the absence of substrates, shows slow but yet significant NADPH oxidase activity. Acts as a positive modulator of cholesterol biosynthesis as well as glucose homeostasis, promoting metabolic aging via pleiotropic effects. The chain is Flavin-containing monooxygenase 5 (FMO5) from Cavia porcellus (Guinea pig).